A 450-amino-acid polypeptide reads, in one-letter code: Phosphoglucosamine mutase (450 aa).

S97 functions as the Phosphoserine intermediate in the catalytic mechanism. Mg(2+) contacts are provided by S97, D236, D238, and D240. A Phosphoserine modification is found at S97.

Belongs to the phosphohexose mutase family. The cofactor is Mg(2+). Post-translationally, activated by phosphorylation.

It carries out the reaction alpha-D-glucosamine 1-phosphate = D-glucosamine 6-phosphate. Its function is as follows. Catalyzes the conversion of glucosamine-6-phosphate to glucosamine-1-phosphate. The chain is Phosphoglucosamine mutase from Prochlorococcus marinus (strain AS9601).